We begin with the raw amino-acid sequence, 276 residues long: Bifunctional esterase/perhydrolase DCH (276 aa).

The AB hydrolase-1 domain occupies 23–254 (PVIFFHHGWP…NGKLISYPGF (232 aa)). Catalysis depends on residues serine 97, aspartate 227, and histidine 256.

It belongs to the AB hydrolase superfamily. Bacterial non-heme haloperoxidase / perhydrolase family. As to quaternary structure, homodimer.

It catalyses the reaction 3,4-dihydrocoumarin + H2O = 3-(2-hydroxyphenyl)propanoate + H(+). The catalysed reaction is peracetic acid + H2O = acetate + H2O2 + H(+). The enzyme catalyses a percarboxylic acid + H2O = a carboxylate + H2O2 + H(+). With respect to regulation, inhibited by the serine protease inhibitors diisopropyl fluorophosphate and phenylmethanesulfonyl fluoride. Multifunctional enzyme, which shows esterase and perhydrolase activities, and is capable of organic acid-assisted bromination of organic compounds. Catalyzes the hydrolysis of 3,4-dihydrocoumarin. Aromatic lactones other than 3,4-dihydrocoumarin, such as 2-coumaranone and homogentisic acid lactone, are also substrates, but their activities relative to that of 3,4-dihydrocoumarin are quite low. Also catalyzes the hydrolysis of several linear esters, with specificity toward methyl esters. In addition, shows perhydrolase activity and catalyzes the dose- and time-dependent degradation of peracetic acid, a broad-spectrum biocide, to acetic acid and hydrogen peroxide. It suggests that in vivo DCH may play a role in the oxidative stress defense system and detoxify peroxoacids in conjunction with the catalase, i.e. peroxoacids are first hydrolyzed to the corresponding acids and hydrogen peroxide by DCH, and then the resulting hydrogen peroxide is degraded by the catalase. Also shows organic acid-assisted bromination activity toward monochlorodimedon when incubated with hydrogen peroxide and dihydrocoumarin or an organic acid, such as acetate and n-butyrate. This Acinetobacter calcoaceticus protein is Bifunctional esterase/perhydrolase DCH.